A 488-amino-acid polypeptide reads, in one-letter code: N-acyl-D-glutamate deacylase (488 aa).

The protein belongs to the metallo-dependent hydrolases superfamily. N-acyl-D-amino-acid deacylase family. It depends on Zn(2+) as a cofactor.

The protein localises to the cytoplasm. It carries out the reaction an N-acyl-D-glutamate + H2O = D-glutamate + a carboxylate. With respect to regulation, inhibited by cobalt, copper and EDTA. The polypeptide is N-acyl-D-glutamate deacylase (Alcaligenes xylosoxydans xylosoxydans (Achromobacter xylosoxidans)).